The following is a 452-amino-acid chain: Putative purine permease CPE0397 (452 aa).

The next 12 helical transmembrane spans lie at 34–54 (IFAAFGGIIVVPLVIATSLGF), 58–78 (VTTALISASILGSGLATIIQA), 83–103 (KVGARVACIMGTDFTFVSPAI), 108–128 (VLGLPGIIGATILGSLFEVIL), 138–158 (FFPPLVTGTVVALIGLTLLPV), 172–192 (YASLENLAVAMFVLVITLLLN), 201–221 (SASILIGIVVGYIVCIPLGLV), 250–270 (MAFIPAYFVATIGTVGCLKAI), 326–346 (AVMAGILLVILGFLPKVAAII), 348–368 (GIPNPVLGGVGIMMFGTVAAA), 383–403 (LLIIAISMGLGLGVTFRPDVI), and 412–432 (MIFSSGISTGTIAALILNAVL).

This sequence belongs to the nucleobase:cation symporter-2 (NCS2) (TC 2.A.40) family.

The protein resides in the cell membrane. The chain is Putative purine permease CPE0397 (cpx) from Clostridium perfringens (strain 13 / Type A).